The following is a 624-amino-acid chain: Carbon monoxide dehydrogenase (624 aa).

[4Fe-4S] cluster-binding residues include cysteine 37, cysteine 46, cysteine 49, cysteine 54, and cysteine 65. Residues histidine 256, cysteine 292, cysteine 336, cysteine 444, cysteine 475, and cysteine 516 each contribute to the [Ni-4Fe-5S] cluster site.

The protein belongs to the Ni-containing carbon monoxide dehydrogenase family. In terms of assembly, homodimer. Requires [4Fe-4S] cluster as cofactor. The cofactor is [Ni-4Fe-5S] cluster.

It carries out the reaction CO + 2 oxidized [2Fe-2S]-[ferredoxin] + H2O = 2 reduced [2Fe-2S]-[ferredoxin] + CO2 + 2 H(+). Its function is as follows. CODH oxidizes carbon monoxide coupled, via CooF, to the reduction of a hydrogen cation by a hydrogenase (possibly CooH). The sequence is that of Carbon monoxide dehydrogenase (cooS) from Methanocaldococcus jannaschii (strain ATCC 43067 / DSM 2661 / JAL-1 / JCM 10045 / NBRC 100440) (Methanococcus jannaschii).